The following is a 142-amino-acid chain: Acetyltransferase SG1711 (142 aa).

Positions 1 to 142 (MEIRVFRHDD…GKRLIEDQEY (142 aa)) constitute an N-acetyltransferase domain.

Belongs to the acetyltransferase family. YpeA subfamily.

The protein is Acetyltransferase SG1711 of Sodalis glossinidius (strain morsitans).